Consider the following 364-residue polypeptide: tRNA 2-selenouridine synthase (364 aa).

Residues 14–137 enclose the Rhodanese domain; it reads LIADTPIIDV…LRQTAIQATI (124 aa). Residue cysteine 97 is the S-selanylcysteine intermediate of the active site.

Belongs to the SelU family. In terms of assembly, monomer.

It catalyses the reaction 5-methylaminomethyl-2-thiouridine(34) in tRNA + selenophosphate + (2E)-geranyl diphosphate + H2O + H(+) = 5-methylaminomethyl-2-selenouridine(34) in tRNA + (2E)-thiogeraniol + phosphate + diphosphate. The catalysed reaction is 5-methylaminomethyl-2-thiouridine(34) in tRNA + (2E)-geranyl diphosphate = 5-methylaminomethyl-S-(2E)-geranyl-thiouridine(34) in tRNA + diphosphate. It carries out the reaction 5-methylaminomethyl-S-(2E)-geranyl-thiouridine(34) in tRNA + selenophosphate + H(+) = 5-methylaminomethyl-2-(Se-phospho)selenouridine(34) in tRNA + (2E)-thiogeraniol. The enzyme catalyses 5-methylaminomethyl-2-(Se-phospho)selenouridine(34) in tRNA + H2O = 5-methylaminomethyl-2-selenouridine(34) in tRNA + phosphate. Functionally, involved in the post-transcriptional modification of the uridine at the wobble position (U34) of tRNA(Lys), tRNA(Glu) and tRNA(Gln). Catalyzes the conversion of 2-thiouridine (S2U-RNA) to 2-selenouridine (Se2U-RNA). Acts in a two-step process involving geranylation of 2-thiouridine (S2U) to S-geranyl-2-thiouridine (geS2U) and subsequent selenation of the latter derivative to 2-selenouridine (Se2U) in the tRNA chain. This is tRNA 2-selenouridine synthase from Shigella boydii serotype 18 (strain CDC 3083-94 / BS512).